The sequence spans 100 residues: Large ribosomal subunit protein uL23 (100 aa).

This sequence belongs to the universal ribosomal protein uL23 family. As to quaternary structure, part of the 50S ribosomal subunit. Contacts protein L29, and trigger factor when it is bound to the ribosome.

One of the early assembly proteins it binds 23S rRNA. One of the proteins that surrounds the polypeptide exit tunnel on the outside of the ribosome. Forms the main docking site for trigger factor binding to the ribosome. In Vibrio vulnificus (strain CMCP6), this protein is Large ribosomal subunit protein uL23.